We begin with the raw amino-acid sequence, 301 residues long: Aspartate carbamoyltransferase catalytic subunit (301 aa).

Residues arginine 46 and threonine 47 each coordinate carbamoyl phosphate. Lysine 74 is a binding site for L-aspartate. Carbamoyl phosphate is bound by residues arginine 96, histidine 124, and glutamine 127. Arginine 157 and arginine 208 together coordinate L-aspartate. Residues alanine 249 and proline 250 each contribute to the carbamoyl phosphate site.

This sequence belongs to the aspartate/ornithine carbamoyltransferase superfamily. ATCase family. As to quaternary structure, heterododecamer (2C3:3R2) of six catalytic PyrB chains organized as two trimers (C3), and six regulatory PyrI chains organized as three dimers (R2).

It carries out the reaction carbamoyl phosphate + L-aspartate = N-carbamoyl-L-aspartate + phosphate + H(+). The protein operates within pyrimidine metabolism; UMP biosynthesis via de novo pathway; (S)-dihydroorotate from bicarbonate: step 2/3. Its function is as follows. Catalyzes the condensation of carbamoyl phosphate and aspartate to form carbamoyl aspartate and inorganic phosphate, the committed step in the de novo pyrimidine nucleotide biosynthesis pathway. The protein is Aspartate carbamoyltransferase catalytic subunit of Bacillus cereus (strain ATCC 14579 / DSM 31 / CCUG 7414 / JCM 2152 / NBRC 15305 / NCIMB 9373 / NCTC 2599 / NRRL B-3711).